Reading from the N-terminus, the 156-residue chain is MSINATLLIQIIAFVLLIWFVNKVLWGPLSKLMEDRQKKIADGLSAAEKGKHELELAEQRAKEVLKEAKAQAQNVLSQAEKRGSEIVEDAKIKATEEADRIKAAAQAELEQEVSRAREDLRKEVSTLVVSGAEKILNKEVDAAAHNDMLETLVKSI.

Residues 1 to 21 (MSINATLLIQIIAFVLLIWFV) form a helical membrane-spanning segment.

Belongs to the ATPase B chain family. As to quaternary structure, F-type ATPases have 2 components, F(1) - the catalytic core - and F(0) - the membrane proton channel. F(1) has five subunits: alpha(3), beta(3), gamma(1), delta(1), epsilon(1). F(0) has three main subunits: a(1), b(2) and c(10-14). The alpha and beta chains form an alternating ring which encloses part of the gamma chain. F(1) is attached to F(0) by a central stalk formed by the gamma and epsilon chains, while a peripheral stalk is formed by the delta and b chains.

The protein localises to the cell inner membrane. In terms of biological role, f(1)F(0) ATP synthase produces ATP from ADP in the presence of a proton or sodium gradient. F-type ATPases consist of two structural domains, F(1) containing the extramembraneous catalytic core and F(0) containing the membrane proton channel, linked together by a central stalk and a peripheral stalk. During catalysis, ATP synthesis in the catalytic domain of F(1) is coupled via a rotary mechanism of the central stalk subunits to proton translocation. Component of the F(0) channel, it forms part of the peripheral stalk, linking F(1) to F(0). The polypeptide is ATP synthase subunit b (Hydrogenovibrio crunogenus (strain DSM 25203 / XCL-2) (Thiomicrospira crunogena)).